A 51-amino-acid polypeptide reads, in one-letter code: MADLIGLAIVFLIFALVAYVLGARGVAGLSMTIAKWLVIIFIVLAIITILL.

The next 2 helical transmembrane spans lie at 1-21 (MADLIGLAIVFLIFALVAYVL) and 31-51 (MTIAKWLVIIFIVLAIITILL).

Belongs to the UPF0391 family.

It localises to the cell membrane. The protein is UPF0391 membrane protein Mbur_2216 of Methanococcoides burtonii (strain DSM 6242 / NBRC 107633 / OCM 468 / ACE-M).